We begin with the raw amino-acid sequence, 288 residues long: Phosphatidate cytidylyltransferase (288 aa).

The next 7 helical transmembrane spans lie at 10-30, 52-72, 89-109, 118-138, 152-172, 192-212, and 223-243; these read IVLI…YFAL, PLIR…WLYT, LLLI…ISYP, NPLL…AGVL, GLFL…GAYF, WEGV…FIHF, and ITGF…GDLT.

This sequence belongs to the CDS family.

The protein localises to the cell inner membrane. It catalyses the reaction a 1,2-diacyl-sn-glycero-3-phosphate + CTP + H(+) = a CDP-1,2-diacyl-sn-glycerol + diphosphate. Its pathway is phospholipid metabolism; CDP-diacylglycerol biosynthesis; CDP-diacylglycerol from sn-glycerol 3-phosphate: step 3/3. The protein is Phosphatidate cytidylyltransferase (cdsA) of Haemophilus influenzae (strain ATCC 51907 / DSM 11121 / KW20 / Rd).